We begin with the raw amino-acid sequence, 154 residues long: uncharacterized protein (154 aa).

It localises to the mitochondrion. This is an uncharacterized protein from Vicia faba (Broad bean).